The following is a 275-amino-acid chain: Probable aquaporin NIP7-1 (275 aa).

Positions 1–11 (MNGEARSRVVD) are enriched in basic and acidic residues. Residues 1–26 (MNGEARSRVVDQEAGSTPSTLRDEDH) are disordered. The next 2 membrane-spanning stretches (helical) occupy residues 47–67 (IVMAELVGTFILMFSVCGVIS) and 76–96 (VGLLEYAVTAGLSVVVVVYSI). Residues 105–107 (NPS) carry the NPA 1 motif. Helical transmembrane passes span 127–147 (ITAQTLGATAATLVGVSVYGV), 161–181 (VSAFFVELIATSIVVFLASAL), and 192–212 (LTGFVIGTVISLGVLITGPIS). The NPA 2 signature appears at 217-219 (NPA). Residues 231 to 251 (FEDLWIYMTAPVIGAIIGVLT) form a helical membrane-spanning segment. Ser-272 is subject to Phosphoserine.

This sequence belongs to the MIP/aquaporin (TC 1.A.8) family. NIP (TC 1.A.8.12) subfamily. In terms of tissue distribution, expressed in floral buds.

It localises to the membrane. In terms of biological role, aquaporins facilitate the transport of water and small neutral solutes across cell membranes. The polypeptide is Probable aquaporin NIP7-1 (NIP7-1) (Arabidopsis thaliana (Mouse-ear cress)).